An 86-amino-acid chain; its full sequence is MANSASSRKRARQAVKRNKHNSQIRAKVRTFIKKVTYALEAGNKEQAQNCFTIMQKMLDQAVNKGLIHKNQAARKKSRLNSQIKAL.

A disordered region spans residues 1 to 25 (MANSASSRKRARQAVKRNKHNSQIR). Positions 7–25 (SRKRARQAVKRNKHNSQIR) are enriched in basic residues.

Belongs to the bacterial ribosomal protein bS20 family.

In terms of biological role, binds directly to 16S ribosomal RNA. The sequence is that of Small ribosomal subunit protein bS20 from Vesicomyosocius okutanii subsp. Calyptogena okutanii (strain HA).